A 495-amino-acid polypeptide reads, in one-letter code: Lanosterol 14-alpha demethylase erg11 (495 aa).

The helical transmembrane segment at 2–22 (AFSLVSILLSIALAWYVGYII) threads the bilayer. Heme is bound at residue cysteine 442.

This sequence belongs to the cytochrome P450 family. As to quaternary structure, interacts with dap1. Heme is required as a cofactor.

It is found in the endoplasmic reticulum. It localises to the membrane. The enzyme catalyses a 14alpha-methyl steroid + 3 reduced [NADPH--hemoprotein reductase] + 3 O2 = a Delta(14) steroid + formate + 3 oxidized [NADPH--hemoprotein reductase] + 4 H2O + 4 H(+). It catalyses the reaction a 14alpha-methyl steroid + reduced [NADPH--hemoprotein reductase] + O2 = a 14alpha-hydroxymethyl steroid + oxidized [NADPH--hemoprotein reductase] + H2O + H(+). It carries out the reaction a 14alpha-hydroxymethyl steroid + reduced [NADPH--hemoprotein reductase] + O2 = a 14alpha-formyl steroid + oxidized [NADPH--hemoprotein reductase] + 2 H2O + H(+). The catalysed reaction is a 14alpha-formyl steroid + reduced [NADPH--hemoprotein reductase] + O2 = a Delta(14) steroid + formate + oxidized [NADPH--hemoprotein reductase] + H2O + 2 H(+). The enzyme catalyses lanosterol + 3 reduced [NADPH--hemoprotein reductase] + 3 O2 = 4,4-dimethyl-5alpha-cholesta-8,14,24-trien-3beta-ol + formate + 3 oxidized [NADPH--hemoprotein reductase] + 4 H2O + 4 H(+). It catalyses the reaction lanosterol + reduced [NADPH--hemoprotein reductase] + O2 = 32-hydroxylanosterol + oxidized [NADPH--hemoprotein reductase] + H2O + H(+). It carries out the reaction 32-hydroxylanosterol + reduced [NADPH--hemoprotein reductase] + O2 = 32-oxolanosterol + oxidized [NADPH--hemoprotein reductase] + 2 H2O + H(+). The catalysed reaction is 32-oxolanosterol + reduced [NADPH--hemoprotein reductase] + O2 = 4,4-dimethyl-5alpha-cholesta-8,14,24-trien-3beta-ol + formate + oxidized [NADPH--hemoprotein reductase] + H2O + 2 H(+). The enzyme catalyses eburicol + 3 reduced [NADPH--hemoprotein reductase] + 3 O2 = 14-demethyleburicol + formate + 3 oxidized [NADPH--hemoprotein reductase] + 4 H2O + 4 H(+). It catalyses the reaction eburicol + reduced [NADPH--hemoprotein reductase] + O2 = 32-hydroxyeburicol + oxidized [NADPH--hemoprotein reductase] + H2O + H(+). It carries out the reaction 32-hydroxyeburicol + reduced [NADPH--hemoprotein reductase] + O2 = 32-oxoeburicol + oxidized [NADPH--hemoprotein reductase] + 2 H2O + H(+). The catalysed reaction is 32-oxoeburicol + reduced [NADPH--hemoprotein reductase] + O2 = 14-demethyleburicol + formate + oxidized [NADPH--hemoprotein reductase] + H2O + 2 H(+). Its pathway is steroid biosynthesis; zymosterol biosynthesis; zymosterol from lanosterol: step 1/6. The protein operates within steroid metabolism; ergosterol biosynthesis. In terms of biological role, sterol 14alpha-demethylase that plays a critical role in the third module of ergosterol biosynthesis pathway, being ergosterol the major sterol component in fungal membranes that participates in a variety of functions. The third module or late pathway involves the ergosterol synthesis itself through consecutive reactions that mainly occur in the endoplasmic reticulum (ER) membrane. In filamentous fungi, during the initial step of this module, lanosterol (lanosta-8,24-dien-3beta-ol) can be metabolized to eburicol. Sterol 14alpha-demethylase catalyzes the three-step oxidative removal of the 14alpha-methyl group (C-32) of both these sterols in the form of formate, and converts eburicol and lanosterol to 14-demethyleburicol (4,4,24-trimethylergosta-8,14,24(28)-trienol) and 4,4-dimethyl-5alpha-cholesta-8,14,24-trien-3beta-ol, respectively, which are further metabolized by other enzymes in the pathway to ergosterol. Can also use substrates not intrinsic to fungi, such as 24,25-dihydrolanosterol (DHL), producing 4,4-dimethyl-8,14-cholestadien-3-beta-ol, but at lower rates than the endogenous substrates. This Schizosaccharomyces pombe (strain 972 / ATCC 24843) (Fission yeast) protein is Lanosterol 14-alpha demethylase erg11.